A 262-amino-acid polypeptide reads, in one-letter code: Endoplasmic reticulum chaperone BiP (262 aa).

8 to 11 contacts ATP; the sequence is GSTR. The tract at residues 53 to 63 is interdomain linker; the sequence is QDTGDLVLLDV. The interval 64–144 is substrate-binding (SBD); it reads CPLTLGIETV…PRGVPQIEVT (81 aa). At lysine 91 the chain carries N6-succinyllysine. Omega-N-methylarginine is present on arginine 136. Threonine 162 carries the O-AMP-threonine; alternate modification. Threonine 162 is subject to Phosphothreonine; alternate. Lysine 229 bears the N6,N6,N6-trimethyllysine; by METTL21A; in vitro mark. Lysine 229 is modified (N6,N6-dimethyllysine; alternate). Residue lysine 229 is modified to N6-methyllysine; alternate. Lysine 235 carries the N6-methyllysine modification.

It belongs to the heat shock protein 70 family. In terms of assembly, monomer and homooligomer; homooligomerization via the interdomain linker inactivates the chaperone activity and acts as a storage of HSPA5/BiP molecules. Interacts with DNAJC1 (via J domain). Component of an EIF2 complex at least composed of CELF1/CUGBP1, CALR, CALR3, EIF2S1, EIF2S2, HSP90B1 and HSPA5. Part of a large chaperone multiprotein complex comprising DNAJB11, HSP90B1, HSPA5, HYOU, PDIA2, PDIA4, PDIA6, PPIB, SDF2L1, UGGT1 and very small amounts of ERP29, but not, or at very low levels, CALR nor CANX. Interacts with TMEM132A and TRIM21. May form a complex with ERLEC1, OS9, SEL1L and SYVN1. Interacts with DNAJC10. Interacts with DNAJB9/ERdj4; leading to recruit HSPA5/BiP to ERN1/IRE1. Interacts with ERN1/IRE1 (via luminal domain); the interaction takes place following interaction with DNAJB9/ERdj4 and leads to inactivate ERN1/IRE1, the interaction also competitively inhibits ERN1 interaction with MANF. Interacts directly with MANF (via SAP domain); the interaction inhibits ATP binding to HSPA5/BiP and subsequent nucleotide exchange. Interacts with EIF2AK3/PERK (via luminal domain); interaction leads to inactivate EIF2AK3/PERK. Interacts with MX1. Interacts with METTL23. Interacts with CEMIP; the interaction induces calcium leakage from the endoplasmic reticulum and cell migration. Interacts with PCSK4 form; the interaction takes place in the endoplasmic reticulum. Interacts with CIPC. Interacts with CCDC88B (via C-terminus); the interaction opposes ERN1-mediated JNK activation, protecting against apoptosis. Interacts with INPP5K; necessary for INPP5K localization at the endoplasmic reticulum. Interacts with MANF; the interaction is direct. Interacts with LOXL2; leading to activate the ERN1/IRE1-XBP1 pathway of the unfolded protein response. Interacts with CLU under stressed condition; interaction increases CLU protein stability; facilitates its retrotranslocation and redistribution to the mitochondria; cooperatively suppress stress-induced apoptosis by stabilizing mitochondrial membrane integrity. Interacts with CCDC47. Interacts with CLN3. Interacts with ELAPOR1; may regulate the function of HSPA5 in apoptosis and cell proliferation. Interacts with CASP7. Interacts with ILDR2; the interaction stabilizes ILDR2 expression. Interacts with ADAM7. Post-translationally, in unstressed cells, AMPylation at Thr-162 by FICD inactivates the chaperome activity: AMPylated form is locked in a relatively inert state and only weakly stimulated by J domain-containing proteins. In response to endoplasmic reticulum stress, de-AMPylation by the same protein, FICD, restores the chaperone activity.

It is found in the endoplasmic reticulum lumen. Its subcellular location is the melanosome. The protein resides in the cytoplasm. It localises to the cell surface. The enzyme catalyses ATP + H2O = ADP + phosphate + H(+). Its activity is regulated as follows. The chaperone activity is regulated by ATP-induced allosteric coupling of the nucleotide-binding (NBD) and substrate-binding (SBD) domains. In the ADP-bound and nucleotide-free (apo) states, the two domains have little interaction. In contrast, in the ATP-bound state the two domains are tightly coupled, which results in drastically accelerated kinetics in both binding and release of polypeptide substrates. J domain-containing co-chaperones (DNAJB9/ERdj4 or DNAJC10/ERdj5) stimulate the ATPase activity and are required for efficient substrate recognition by HSPA5/BiP. Homooligomerization inactivates participating HSPA5/BiP protomers and probably act as reservoirs to store HSPA5/BiP molecules when they are not needed by the cell. Endoplasmic reticulum chaperone that plays a key role in protein folding and quality control in the endoplasmic reticulum lumen. Involved in the correct folding of proteins and degradation of misfolded proteins via its interaction with DNAJC10/ERdj5, probably to facilitate the release of DNAJC10/ERdj5 from its substrate. Acts as a key repressor of the EIF2AK3/PERK and ERN1/IRE1-mediated unfolded protein response (UPR). In the unstressed endoplasmic reticulum, recruited by DNAJB9/ERdj4 to the luminal region of ERN1/IRE1, leading to disrupt the dimerization of ERN1/IRE1, thereby inactivating ERN1/IRE1. Also binds and inactivates EIF2AK3/PERK in unstressed cells. Accumulation of misfolded protein in the endoplasmic reticulum causes release of HSPA5/BiP from ERN1/IRE1 and EIF2AK3/PERK, allowing their homodimerization and subsequent activation. Plays an auxiliary role in post-translational transport of small presecretory proteins across endoplasmic reticulum (ER). May function as an allosteric modulator for SEC61 channel-forming translocon complex, likely cooperating with SEC62 to enable the productive insertion of these precursors into SEC61 channel. Appears to specifically regulate translocation of precursors having inhibitory residues in their mature region that weaken channel gating. May also play a role in apoptosis and cell proliferation. The chain is Endoplasmic reticulum chaperone BiP from Sus scrofa (Pig).